Here is a 900-residue protein sequence, read N- to C-terminus: Protein translocase subunit SecA (900 aa).

ATP-binding positions include Gln-87, 105–109 (GEGKT), and Asp-512. A disordered region spans residues 849–900 (ERLAQQQQFSHQEEDSLNTGSPAQADRKIGRNDPCPCGSGKKYKQCHGRLQK). Residues Cys-883, Cys-885, Cys-894, and His-895 each coordinate Zn(2+). The segment covering 889–900 (KKYKQCHGRLQK) has biased composition (basic residues).

Belongs to the SecA family. Monomer and homodimer. Part of the essential Sec protein translocation apparatus which comprises SecA, SecYEG and auxiliary proteins SecDF-YajC and YidC. Requires Zn(2+) as cofactor.

The protein localises to the cell inner membrane. The protein resides in the cytoplasm. It carries out the reaction ATP + H2O + cellular proteinSide 1 = ADP + phosphate + cellular proteinSide 2.. In terms of biological role, part of the Sec protein translocase complex. Interacts with the SecYEG preprotein conducting channel. Has a central role in coupling the hydrolysis of ATP to the transfer of proteins into and across the cell membrane, serving both as a receptor for the preprotein-SecB complex and as an ATP-driven molecular motor driving the stepwise translocation of polypeptide chains across the membrane. The protein is Protein translocase subunit SecA of Pectobacterium atrosepticum (strain SCRI 1043 / ATCC BAA-672) (Erwinia carotovora subsp. atroseptica).